Reading from the N-terminus, the 306-residue chain is MATH domain and coiled-coil domain-containing protein At3g29580 (306 aa).

The MATH domain maps to 6–132 (DNKFTWVIKN…NGEIKIVVEF (127 aa)). The stretch at 253–298 (FKLDWLEKKLNEVLEKKEKEESYETRMREIEEEMKDLKAKALDVGA) forms a coiled coil.

This chain is MATH domain and coiled-coil domain-containing protein At3g29580, found in Arabidopsis thaliana (Mouse-ear cress).